A 165-amino-acid chain; its full sequence is Lipoprotein signal peptidase (165 aa).

Transmembrane regions (helical) follow at residues 9–29, 65–85, and 97–119; these read PFLW…LAVV, WQKY…LFFL, and TGYA…HGFV. Active-site residues include Asp-121 and Asp-139. A helical transmembrane segment spans residues 134–154; the sequence is VFNIADVAICIGAGLLAIDAF.

The protein belongs to the peptidase A8 family.

The protein resides in the cell inner membrane. It catalyses the reaction Release of signal peptides from bacterial membrane prolipoproteins. Hydrolyzes -Xaa-Yaa-Zaa-|-(S,diacylglyceryl)Cys-, in which Xaa is hydrophobic (preferably Leu), and Yaa (Ala or Ser) and Zaa (Gly or Ala) have small, neutral side chains.. It participates in protein modification; lipoprotein biosynthesis (signal peptide cleavage). Functionally, this protein specifically catalyzes the removal of signal peptides from prolipoproteins. This chain is Lipoprotein signal peptidase, found in Histophilus somni (strain 129Pt) (Haemophilus somnus).